A 249-amino-acid chain; its full sequence is Derlin-2.2 (249 aa).

The Cytoplasmic segment spans residues 1 to 21 (MAQAVEEWYRQMPIITRSYLT). The helical transmembrane segment at 22 to 42 (AAVVTTVGCTLEIISPYHLYL) threads the bilayer. At 43 to 96 (NPKLVVQHYEIWRLVTNFLYFRKMDLDFLFHMFFLARYCKLLEENSFRGRTADF) the chain is on the lumenal side. The helical transmembrane segment at 97–117 (FYMLLFGATVLTGIVLIGGMI) threads the bilayer. Topologically, residues 118 to 122 (PYISE) are cytoplasmic. Residues 123–143 (TFARILFLSNSLTFMMVYVWS) form a helical membrane-spanning segment. Over 144–152 (KHNPFIHMS) the chain is Lumenal. The chain crosses the membrane as a helical span at residues 153–173 (FLGLFTFTAAYLPWVLLGFSI). Residues 174–249 (LVGSSTWVDL…GAIGVDPQAQ (76 aa)) are Cytoplasmic-facing.

This sequence belongs to the derlin family. As to expression, expressed in roots, stalks, leaves, immature ears, embryo and endosperm.

It is found in the endoplasmic reticulum membrane. Functionally, may be involved in the degradation process of specific misfolded endoplasmic reticulum (ER) luminal proteins. This is Derlin-2.2 (DER2.2) from Zea mays (Maize).